The sequence spans 181 residues: Gastrokine-3 (181 aa).

A signal peptide spans 1 to 20 (MKHLVASSILGVFVLTPSLA). Residues 53–145 (NNIFSEWDGI…MCRDDPTYFA (93 aa)) enclose the BRICHOS domain. Cys-80 and Cys-137 form a disulfide bridge.

The protein belongs to the gastrokine family.

Its subcellular location is the secreted. Its function is as follows. May inhibit gastric epithelial cell proliferation. The protein is Gastrokine-3 (GKN3P) of Homo sapiens (Human).